We begin with the raw amino-acid sequence, 273 residues long: Cysteine protease S273R (273 aa).

Residues His168 and Asn187 contribute to the active site. Gln226 is a binding site for substrate. The active-site Nucleophile is Cys232.

This sequence belongs to the peptidase C63 family.

It is found in the host cytoplasm. The protein resides in the virion. In terms of biological role, cysteine protease that plays several role during infection including processing of the structural polyprotein or inhibition of the host immune response. Catalyzes the maturation of the pp220 and pp62 polyprotein precursors into core-shell proteins. Plays a role in the disruption of host pyroptosis via specific cleavage of gasdermin D/GSDMD. In addition, strongly decreases the host cGAS-STING signaling by targeting IKBKE via its enzymatic activity. Also impairs host FOXJ1-mediated antiviral effect via degradation of FOXJ1. In African swine fever virus (isolate Tick/Malawi/Lil 20-1/1983) (ASFV), this protein is Cysteine protease S273R.